A 194-amino-acid polypeptide reads, in one-letter code: Interferon alpha (194 aa).

The first 23 residues, 1-23 (MALPSSFLVALVALGCNSVCSLG), serve as a signal peptide directing secretion. 2 disulfides stabilise this stretch: Cys-24/Cys-123 and Cys-52/Cys-166. A glycan (N-linked (GlcNAc...) asparagine) is linked at Asn-102.

Belongs to the alpha/beta interferon family.

It is found in the secreted. Its function is as follows. Produced by macrophages, IFN-alpha have antiviral activities. Interferon stimulates the production of two enzymes: a protein kinase and an oligoadenylate synthetase. This chain is Interferon alpha, found in Felis catus (Cat).